We begin with the raw amino-acid sequence, 318 residues long: NADH-ubiquinone oxidoreductase chain 1 (318 aa).

The next 8 membrane-spanning stretches (helical) occupy residues 2–22, 68–88, 102–122, 146–166, 171–191, 217–237, 253–273, and 294–314; these read FLMN…FLTL, ISLF…MWIP, ILFI…SGWA, LAII…SSLI, FTWL…STLA, AGPF…MNAL, EMFT…FLWI, and LPLT…MACI.

The protein belongs to the complex I subunit 1 family.

Its subcellular location is the mitochondrion inner membrane. It catalyses the reaction a ubiquinone + NADH + 5 H(+)(in) = a ubiquinol + NAD(+) + 4 H(+)(out). In terms of biological role, core subunit of the mitochondrial membrane respiratory chain NADH dehydrogenase (Complex I) that is believed to belong to the minimal assembly required for catalysis. Complex I functions in the transfer of electrons from NADH to the respiratory chain. The immediate electron acceptor for the enzyme is believed to be ubiquinone. The protein is NADH-ubiquinone oxidoreductase chain 1 (MT-ND1) of Tamias sibiricus (Siberian chipmunk).